The primary structure comprises 336 residues: Anthranilate phosphoribosyltransferase (336 aa).

5-phospho-alpha-D-ribose 1-diphosphate-binding positions include Gly81, 84-85 (GD), Ser89, 91-94 (NIST), 109-117 (KHGNRGLSS), and Ala121. An anthranilate-binding site is contributed by Gly81. Ser93 contacts Mg(2+). Asn112 is a binding site for anthranilate. Arg167 is an anthranilate binding site. Residues Asp225 and Glu226 each contribute to the Mg(2+) site.

It belongs to the anthranilate phosphoribosyltransferase family. Homodimer. It depends on Mg(2+) as a cofactor.

It carries out the reaction N-(5-phospho-beta-D-ribosyl)anthranilate + diphosphate = 5-phospho-alpha-D-ribose 1-diphosphate + anthranilate. Its pathway is amino-acid biosynthesis; L-tryptophan biosynthesis; L-tryptophan from chorismate: step 2/5. In terms of biological role, catalyzes the transfer of the phosphoribosyl group of 5-phosphorylribose-1-pyrophosphate (PRPP) to anthranilate to yield N-(5'-phosphoribosyl)-anthranilate (PRA). The chain is Anthranilate phosphoribosyltransferase from Mesorhizobium japonicum (strain LMG 29417 / CECT 9101 / MAFF 303099) (Mesorhizobium loti (strain MAFF 303099)).